The chain runs to 638 residues: tRNA uridine 5-carboxymethylaminomethyl modification enzyme MnmG (638 aa).

FAD-binding positions include 13-18, valine 125, and serine 180; that span reads GGGHAG. Residue 273-287 participates in NAD(+) binding; that stretch reads GPRYCPSIEDKIHRF. FAD is bound at residue glutamine 370.

Belongs to the MnmG family. In terms of assembly, homodimer. Heterotetramer of two MnmE and two MnmG subunits. The cofactor is FAD.

The protein localises to the cytoplasm. Functionally, NAD-binding protein involved in the addition of a carboxymethylaminomethyl (cmnm) group at the wobble position (U34) of certain tRNAs, forming tRNA-cmnm(5)s(2)U34. The polypeptide is tRNA uridine 5-carboxymethylaminomethyl modification enzyme MnmG (Cellvibrio japonicus (strain Ueda107) (Pseudomonas fluorescens subsp. cellulosa)).